The following is a 609-amino-acid chain: Granule-bound starch synthase 1, chloroplastic/amyloplastic (609 aa).

The N-terminal 77 residues, 1–77, are a transit peptide targeting the chloroplast; that stretch reads MSALTTSQLA…SRRFPSVVVY (77 aa). Positions 29-67 are disordered; that stretch reads RHGFQGLKPRSPAGGDATSLSVTTSARATPKQQRSVQRG. Residues 46 to 66 show a composition bias toward polar residues; the sequence is TSLSVTTSARATPKQQRSVQR. An ADP-alpha-D-glucose-binding site is contributed by Lys97.

This sequence belongs to the glycosyltransferase 1 family. Bacterial/plant glycogen synthase subfamily.

The protein localises to the plastid. The protein resides in the chloroplast. It is found in the amyloplast. The enzyme catalyses an NDP-alpha-D-glucose + [(1-&gt;4)-alpha-D-glucosyl](n) = [(1-&gt;4)-alpha-D-glucosyl](n+1) + a ribonucleoside 5'-diphosphate + H(+). Its pathway is glycan biosynthesis; starch biosynthesis. Required for the synthesis of amylose in endosperm. In Oryza glaberrima (African rice), this protein is Granule-bound starch synthase 1, chloroplastic/amyloplastic (WAXY).